A 632-amino-acid chain; its full sequence is DNA mismatch repair protein MutL (632 aa).

A disordered region spans residues 376–397 (EQPQAEPRQSFTPGSGAGSGYQ).

The protein belongs to the DNA mismatch repair MutL/HexB family.

Functionally, this protein is involved in the repair of mismatches in DNA. It is required for dam-dependent methyl-directed DNA mismatch repair. May act as a 'molecular matchmaker', a protein that promotes the formation of a stable complex between two or more DNA-binding proteins in an ATP-dependent manner without itself being part of a final effector complex. This Pseudomonas entomophila (strain L48) protein is DNA mismatch repair protein MutL.